Consider the following 449-residue polypeptide: MRRVTSVYVWLTVVVKDNTIIATAIPRITDQFKALEDVGWYGSSYLLVTCMFQLIFGKLYGYFPIKWVFLAAIIIFEIGSAVCGAAPTSDAFILEMVVSTYLPEPFDHVLSAGSFYINLPIGAVVIVVLLQFLHVPNTVPVEASSKTLFQHMDPLGVVTFLPAIVCLLLALQWGGTTFPWANGRIIALFVLAGVLLIAFLAIQRKRQDNAMVPPRIITMHPVAFSSLFMTLFAGAYFTIIYYLPIWFQAIKNASAVNSGIMCLPLMLSMVIFSFVAGGGVTATGNPVPFFYIATVLAAAGAGLMTTFEVHTGHPKWIGYQVLLGSGVGMGIQLPIIAVQAVLPAADIPVGTAILTFCQTFGGAIFVSVAQAVFANRLQTGLLRAVPGVSPGLVQEVGATNLDTVIDAQHMGAVKVVYNDALVSAWYLAVALFSVAVLGAVGMSTKRKSA.

7 helical membrane-spanning segments follow: residues 6–26 (SVYV…TAIP), 45–65 (YLLV…YFPI), 67–87 (WVFL…GAAP), 115–135 (FYIN…FLHV), 155–175 (LGVV…QWGG), 182–202 (NGRI…FLAI), and 227–247 (LFMT…PIWF). A glycan (N-linked (GlcNAc...) asparagine) is linked at N252. The next 5 helical transmembrane spans lie at 260–280 (IMCL…GGGV), 287–307 (VPFF…MTTF), 321–341 (VLLG…VQAV), 349–369 (VGTA…VSVA), and 420–440 (ALVS…LGAV).

This sequence belongs to the major facilitator superfamily.

It localises to the cell membrane. In terms of biological role, efflux pump that may provide the dual role of acetylaranotin export and self-protection by allowing the fungus to evade the harmful effect of its own acetylaranotin production. The polypeptide is MFS acetylaranotin efflux transporter ataA (Aspergillus terreus (strain NIH 2624 / FGSC A1156)).